Consider the following 242-residue polypeptide: MPLGLKPCCAVCKTQSSSMWKKGNQGEILCNGCTGKAVSSGGSGASASSTIQQNNGGGKQSKQEIHRRSARLRSTKYKAPASEKKVSTKGKGRRHIFKLKNPIKAPESVSTIITSESMFYKGIYYQIGDVIKVIDEDDGKPYYAQIRGFVQDQYCEKSAALTWLIPTQASPRDRFDPSTYIVGPEEDLPRKMEYLEFVCHAPSEYFKSRSCPFPTLPVRPEKGYVWTHIGPTPAVAIKETVG.

Residues 9-33 form a GATA-type zinc finger; the sequence is CAVCKTQSSSMWKKGNQGEILCNGC. Residues 44–85 form a disordered region; the sequence is GASASSTIQQNNGGGKQSKQEIHRRSARLRSTKYKAPASEKK. The segment covering 45–54 has biased composition (low complexity); the sequence is ASASSTIQQN.

The protein resides in the nucleus. In terms of biological role, component of some chromatin complex recruited to chromatin sites methylated 'Lys-4' of histone H3 (H3K4me), with a preference for trimethylated form (H3K4me3). The protein is GATA zinc finger domain-containing protein 1 (gatad1) of Danio rerio (Zebrafish).